Consider the following 343-residue polypeptide: Homeobox-leucine zipper protein HOX16 (343 aa).

Residues 74 to 133 (LPEKKRRLTPEQVHLLERSFEEENKLEPERKTELARKLGLQPRQVAVWFQNRRARWKTKQ) constitute a DNA-binding region (homeobox). The interval 132-176 (KQLERDFDRLKASFDALRADHDALLQDNHRLHSQVMSLTEKLQEK) is leucine-zipper. The disordered stretch occupies residues 218–239 (FEEQQEQQVKAEDRLSTGSGGS).

Belongs to the HD-ZIP homeobox family. Class I subfamily. In terms of tissue distribution, expressed in seedlings, stems, leaf sheaths and blades and panicles.

The protein resides in the nucleus. Probable transcription factor. The chain is Homeobox-leucine zipper protein HOX16 (HOX16) from Oryza sativa subsp. japonica (Rice).